The following is a 367-amino-acid chain: Biotin synthase (367 aa).

Positions 73-308 constitute a Radical SAM core domain; that stretch reads CCGNTVDLCS…EQIIRYAGGR (236 aa). Residues cysteine 91, cysteine 95, and cysteine 98 each contribute to the [4Fe-4S] cluster site. The [2Fe-2S] cluster site is built by cysteine 136, cysteine 173, cysteine 233, and arginine 303.

This sequence belongs to the radical SAM superfamily. Biotin synthase family. Homodimer. Requires [4Fe-4S] cluster as cofactor. [2Fe-2S] cluster is required as a cofactor.

It catalyses the reaction (4R,5S)-dethiobiotin + (sulfur carrier)-SH + 2 reduced [2Fe-2S]-[ferredoxin] + 2 S-adenosyl-L-methionine = (sulfur carrier)-H + biotin + 2 5'-deoxyadenosine + 2 L-methionine + 2 oxidized [2Fe-2S]-[ferredoxin]. It participates in cofactor biosynthesis; biotin biosynthesis; biotin from 7,8-diaminononanoate: step 2/2. Functionally, catalyzes the conversion of dethiobiotin (DTB) to biotin by the insertion of a sulfur atom into dethiobiotin via a radical-based mechanism. This Picosynechococcus sp. (strain ATCC 27264 / PCC 7002 / PR-6) (Agmenellum quadruplicatum) protein is Biotin synthase.